A 337-amino-acid polypeptide reads, in one-letter code: Tetraacyldisaccharide 4'-kinase (337 aa).

51 to 58 (HVGGAGKT) provides a ligand contact to ATP.

It belongs to the LpxK family.

It catalyses the reaction a lipid A disaccharide + ATP = a lipid IVA + ADP + H(+). The protein operates within glycolipid biosynthesis; lipid IV(A) biosynthesis; lipid IV(A) from (3R)-3-hydroxytetradecanoyl-[acyl-carrier-protein] and UDP-N-acetyl-alpha-D-glucosamine: step 6/6. Functionally, transfers the gamma-phosphate of ATP to the 4'-position of a tetraacyldisaccharide 1-phosphate intermediate (termed DS-1-P) to form tetraacyldisaccharide 1,4'-bis-phosphate (lipid IVA). The chain is Tetraacyldisaccharide 4'-kinase from Afipia carboxidovorans (strain ATCC 49405 / DSM 1227 / KCTC 32145 / OM5) (Oligotropha carboxidovorans).